Here is a 54-residue protein sequence, read N- to C-terminus: ATP synthase protein 8 (54 aa).

A helical transmembrane segment spans residues 8 to 28; it reads WWIINFFIIWTAILLTLVILV.

It belongs to the ATPase protein 8 family. As to quaternary structure, F-type ATPases have 2 components, CF(1) - the catalytic core - and CF(0) - the membrane proton channel.

The protein localises to the mitochondrion membrane. In terms of biological role, mitochondrial membrane ATP synthase (F(1)F(0) ATP synthase or Complex V) produces ATP from ADP in the presence of a proton gradient across the membrane which is generated by electron transport complexes of the respiratory chain. F-type ATPases consist of two structural domains, F(1) - containing the extramembraneous catalytic core and F(0) - containing the membrane proton channel, linked together by a central stalk and a peripheral stalk. During catalysis, ATP synthesis in the catalytic domain of F(1) is coupled via a rotary mechanism of the central stalk subunits to proton translocation. Part of the complex F(0) domain. Minor subunit located with subunit a in the membrane. This is ATP synthase protein 8 (MT-ATP8) from Paracentrotus lividus (Common sea urchin).